The sequence spans 514 residues: Alanine--glyoxylate aminotransferase 2, mitochondrial (514 aa).

The N-terminal 41 residues, 1 to 41 (MTLIWRHLLRPLCLVTSAPRILEMHPFLSLGTSRTSVTKLS), are a transit peptide targeting the mitochondrion. Lys71 is subject to N6-acetyllysine; alternate. The residue at position 71 (Lys71) is an N6-succinyllysine; alternate. Position 84 is an N6-acetyllysine (Lys84). An N6-acetyllysine; alternate modification is found at Lys262. Position 262 is an N6-succinyllysine; alternate (Lys262). Lys304 is subject to N6-succinyllysine. Lys350 bears the N6-(pyridoxal phosphate)lysine mark. An N6-acetyllysine; alternate mark is found at Lys417 and Lys420. Lys417 and Lys420 each carry N6-succinyllysine; alternate.

This sequence belongs to the class-III pyridoxal-phosphate-dependent aminotransferase family. As to quaternary structure, homotetramer. Requires pyridoxal 5'-phosphate as cofactor. Expressed in the convoluted tubule in the kidney and in the liver hepatocytes (at protein level).

It localises to the mitochondrion. The catalysed reaction is glyoxylate + L-alanine = glycine + pyruvate. It carries out the reaction (R)-3-amino-2-methylpropanoate + pyruvate = 2-methyl-3-oxopropanoate + L-alanine. The enzyme catalyses 3-oxopropanoate + L-alanine = beta-alanine + pyruvate. It catalyses the reaction 2-oxobutanoate + L-alanine = (2S)-2-aminobutanoate + pyruvate. The catalysed reaction is N(omega),N(omega)-dimethyl-L-arginine + pyruvate = 5-(3,3-dimethylguanidino)-2-oxopentanoate + L-alanine. It carries out the reaction N(omega),N('omega)-dimethyl-L-arginine + pyruvate = 5-(3,3'-dimethylguanidino)-2-oxopentanoate + L-alanine. The enzyme catalyses N(omega),N(omega)-dimethyl-L-arginine + glyoxylate = 5-(3,3-dimethylguanidino)-2-oxopentanoate + glycine. It catalyses the reaction N(omega),N('omega)-dimethyl-L-arginine + glyoxylate = 5-(3,3'-dimethylguanidino)-2-oxopentanoate + glycine. The catalysed reaction is N(omega)-methyl-L-arginine + pyruvate = 5-(3-methylguanidino)-2-oxopentanoate + L-alanine. It carries out the reaction N(omega)-methyl-L-arginine + glyoxylate = 5-(3-methylguanidino)-2-oxopentanoate + glycine. The enzyme catalyses L-ornithine + pyruvate = 5-amino-2-oxopentanoate + L-alanine. It catalyses the reaction L-ornithine + glyoxylate = 5-amino-2-oxopentanoate + glycine. The catalysed reaction is (2S)-2-aminobutanoate + glyoxylate = 2-oxobutanoate + glycine. It carries out the reaction N(omega),N(omega)-dimethyl-L-arginine + oxaloacetate = 5-(3,3-dimethylguanidino)-2-oxopentanoate + L-aspartate. The enzyme catalyses oxaloacetate + L-alanine = L-aspartate + pyruvate. It catalyses the reaction N(omega),N(omega)-dimethyl-L-arginine + 2-oxobutanoate = 5-(3,3-dimethylguanidino)-2-oxopentanoate + (2S)-2-aminobutanoate. The catalysed reaction is 2-oxopentanoate + N(omega),N(omega)-dimethyl-L-arginine = 5-(3,3-dimethylguanidino)-2-oxopentanoate + L-2-aminopentanoate. It carries out the reaction 2-oxohexanoate + N(omega),N(omega)-dimethyl-L-arginine = L-2-aminohexanoate + 5-(3,3-dimethylguanidino)-2-oxopentanoate. Functionally, multifunctional aminotransferase with a broad substrate specificity. Catalyzes the conversion of glyoxylate to glycine using alanine as the amino donor. Catalyzes metabolism of not L- but the D-isomer of D-beta-aminoisobutyric acid to generate 2-methyl-3-oxopropanoate and alanine. Catalyzes the transfer of the amino group from beta-alanine to pyruvate to yield L-alanine and 3-oxopropanoate. Can metabolize NG-monomethyl-L-arginine (NMMA), asymmetric NG,NG-dimethyl-L-arginine (ADMA) and symmetric NG,N'G-dimethyl-L-arginine (SDMA). ADMA is a potent inhibitor of nitric-oxide (NO) synthase, and this activity provides mechanism through which the kidney regulates blood pressure. The protein is Alanine--glyoxylate aminotransferase 2, mitochondrial (AGXT2) of Homo sapiens (Human).